The primary structure comprises 310 residues: HPr kinase/phosphorylase (310 aa).

Residues H138 and K159 contribute to the active site. Residue 153–160 (GASGIGKS) coordinates ATP. S160 provides a ligand contact to Mg(2+). Residue D177 is the Proton acceptor; for phosphorylation activity. Proton donor; for dephosphorylation activity of the active site. The interval 201–210 (IEIRGVGIID) is important for the catalytic mechanism of both phosphorylation and dephosphorylation. Position 202 (E202) interacts with Mg(2+). R243 is an active-site residue. The interval 264-269 (PVKTGR) is important for the catalytic mechanism of dephosphorylation.

This sequence belongs to the HPrK/P family. In terms of assembly, homohexamer. Mg(2+) is required as a cofactor.

The enzyme catalyses [HPr protein]-L-serine + ATP = [HPr protein]-O-phospho-L-serine + ADP + H(+). The catalysed reaction is [HPr protein]-O-phospho-L-serine + phosphate + H(+) = [HPr protein]-L-serine + diphosphate. Catalyzes the ATP- as well as the pyrophosphate-dependent phosphorylation of a specific serine residue in HPr, a phosphocarrier protein of the phosphoenolpyruvate-dependent sugar phosphotransferase system (PTS). HprK/P also catalyzes the pyrophosphate-producing, inorganic phosphate-dependent dephosphorylation (phosphorolysis) of seryl-phosphorylated HPr (P-Ser-HPr). The two antagonistic activities of HprK/P are regulated by several intracellular metabolites, which change their concentration in response to the absence or presence of rapidly metabolisable carbon sources (glucose, fructose, etc.) in the growth medium. Therefore, by controlling the phosphorylation state of HPr, HPrK/P is a sensor enzyme that plays a major role in the regulation of carbon metabolism and sugar transport: it mediates carbon catabolite repression (CCR), and regulates PTS-catalyzed carbohydrate uptake and inducer exclusion. This Lactococcus lactis subsp. cremoris (strain MG1363) protein is HPr kinase/phosphorylase.